Here is a 192-residue protein sequence, read N- to C-terminus: Xanthine phosphoribosyltransferase (192 aa).

2 residues coordinate xanthine: leucine 20 and asparagine 27. 128–132 lines the 5-phospho-alpha-D-ribose 1-diphosphate pocket; sequence AHGEA. Lysine 156 provides a ligand contact to xanthine.

It belongs to the purine/pyrimidine phosphoribosyltransferase family. Xpt subfamily. In terms of assembly, homodimer.

Its subcellular location is the cytoplasm. The enzyme catalyses XMP + diphosphate = xanthine + 5-phospho-alpha-D-ribose 1-diphosphate. It functions in the pathway purine metabolism; XMP biosynthesis via salvage pathway; XMP from xanthine: step 1/1. Its function is as follows. Converts the preformed base xanthine, a product of nucleic acid breakdown, to xanthosine 5'-monophosphate (XMP), so it can be reused for RNA or DNA synthesis. This chain is Xanthine phosphoribosyltransferase, found in Lactobacillus johnsonii (strain CNCM I-12250 / La1 / NCC 533).